Reading from the N-terminus, the 179-residue chain is CASP-like protein 1F1 (179 aa).

Over 1 to 16 (MENVEDKYNSPLKSQK) the chain is Cytoplasmic. A helical membrane pass occupies residues 17–37 (LFIGAQICLRIVTIGATLAAT). Topologically, residues 38 to 65 (WIMVTDKQSITFGDFVMVAKYNYSSAFK) are extracellular. Residue asparagine 59 is glycosylated (N-linked (GlcNAc...) asparagine). A helical membrane pass occupies residues 66 to 86 (FFVLANVIACACSVVSLLFLC). Over 87–105 (ALGRYSSNPGHVFLLFLHD) the chain is Cytoplasmic. A helical transmembrane segment spans residues 106–126 (LLMMSLVLAGCSAATAIGFLG). At 127–150 (KYGNTKSGWMPICDQFGQFCNRGT) the chain is on the extracellular side. A helical membrane pass occupies residues 151 to 171 (ISMMLSYLSMVCLLILTVTSA). Topologically, residues 172–179 (NKSRQIHV) are cytoplasmic.

It belongs to the Casparian strip membrane proteins (CASP) family. As to quaternary structure, homodimer and heterodimers.

It is found in the cell membrane. The chain is CASP-like protein 1F1 from Ricinus communis (Castor bean).